The following is a 178-amino-acid chain: Plasmid transfer protein TraF (178 aa).

The signal sequence occupies residues 1-30; the sequence is MSRILKRIAAGVVIAGVAALLLAAGGYAAG.

Belongs to the peptidase S26C family.

It localises to the periplasm. Its function is as follows. Required for donor-specific phage sensitivity. May be involved in pilus assembly. This chain is Plasmid transfer protein TraF (traF), found in Escherichia coli.